A 260-amino-acid polypeptide reads, in one-letter code: Trans-aconitate 2-methyltransferase (260 aa).

This sequence belongs to the methyltransferase superfamily. Tam family.

It is found in the cytoplasm. It carries out the reaction trans-aconitate + S-adenosyl-L-methionine = (E)-3-(methoxycarbonyl)pent-2-enedioate + S-adenosyl-L-homocysteine. Its function is as follows. Catalyzes the S-adenosylmethionine monomethyl esterification of trans-aconitate. This chain is Trans-aconitate 2-methyltransferase, found in Paracidovorax citrulli (strain AAC00-1) (Acidovorax citrulli).